The chain runs to 243 residues: MTIYLTELSPETLTFPSPFTALDDPNGLLAFGGDLRPERIWAAYQQGIFPWYGPEDPILWWSPSPRAVFDPTRFQPAKSVKKFQRKHQYRVSVNHATSQVIEQCALTRPADQRWLNDSMRHAYGELAKQGRCHSVEVWQGEQLVGGLYGISVGQLFCGESMFSLATNASKIALWYFCDHFSRHQGQLIDCQVMNPHLQSLGATTLSREQFIQSLLSFKEKQVLSGCFETQWLATPTSPCAFED.

The protein belongs to the L/F-transferase family.

Its subcellular location is the cytoplasm. The catalysed reaction is N-terminal L-lysyl-[protein] + L-leucyl-tRNA(Leu) = N-terminal L-leucyl-L-lysyl-[protein] + tRNA(Leu) + H(+). The enzyme catalyses N-terminal L-arginyl-[protein] + L-leucyl-tRNA(Leu) = N-terminal L-leucyl-L-arginyl-[protein] + tRNA(Leu) + H(+). It carries out the reaction L-phenylalanyl-tRNA(Phe) + an N-terminal L-alpha-aminoacyl-[protein] = an N-terminal L-phenylalanyl-L-alpha-aminoacyl-[protein] + tRNA(Phe). Its function is as follows. Functions in the N-end rule pathway of protein degradation where it conjugates Leu, Phe and, less efficiently, Met from aminoacyl-tRNAs to the N-termini of proteins containing an N-terminal arginine or lysine. This is Leucyl/phenylalanyl-tRNA--protein transferase from Vibrio cholerae serotype O1 (strain ATCC 39541 / Classical Ogawa 395 / O395).